Reading from the N-terminus, the 3856-residue chain is MVLPQPEPIAIVGSGCRFPGSSSSPSSLWDLLEKPRDVSKEPTNERFELRGYYHPNGAHHGTMNVQRAYMLDEDVGTFDATFFNISPNEAESIDPQQRLLMEVVYEALEAGGHRLDILRGSDTAVYVGTMSVDYNDIMLRDINSIPTYFSTGTSRAILANRISYFFDWHGPSMTIDTACSSSMVALHQSVQALRSGESRVAIAGGTELLLGPEQFVGESKMNLLSPTGQSRMWDASANGYARGDGIAAIVLKKLSDAIADGDHIECLIRQTGINQDGKSTGLTVPSSAAQADLIRSTYTKGGLDIDNPRDWPQFFEAHGTGTKAGDPREASAISQCFGSQPIHGNPLYVGSIKTIIGHTEGTAGLAGVFKASLAIQHGIIPPNMLLHQLNDEVAQYCDNLRVPNAPTAWPKLPDGVPRRASVNSFGFGGTNGHAILEEYQPPTETRNTATTGRDENNASVFRIFPFSAASEESLTANLRAYATSLKTRTTVDLVDLAWTLQSRRSALPFKTSLTAECIEGLITKIDSTLEKAKANSGLKVGTRSAPTKPKVLGIFTGQGAQWATMAAGLIRTSETVRRKIEQLDGSLATLPEANRPTWRIADQLCADAEDSRLNEAALSQPLCTAIQVVLIDLLRSSGITFEAVVGHSSGEIAAAYAADYISAHDAIRIAYYRGVYAKHARGPKDQKGAMMAVGTTWEDAEELLNLPAFRGRVKIAAQNSAASLTLSGDVEALSHAKRVFDEEKKFTRLLVVDTAYHSHHMLLCSERYIHSLRTCGIQVNYNRNTSCTWYSSVKHGEPMHPEPSLGDLYWNDNMVNTVLFADAVKGAAKGSQLNLAIEVGPHPALKGPALQTLSDFEMSLPYTGVLKRKGNDLEAFSDALGFVWTHCGPGAVDFQTYEELIYPACKTPSLAIGLPAYQWDHKRVYWYQSRLAKKTQTRGEAFHELLGVPSPNNTDRDLRWSNFLKTNEIPWLNGHQLQGQTVFPAAGYVAMALEAGLKLAQGRSVKVLQIDDLTIDKAVTFDDGANFAVETLVALTGVTQGQSRTKKQTADFAVYSCANTGSSTELGVVSRGKVTVIYGTPSFSTLHSSPHNEKNMVDIQAEQFYSSLHELGYGYNGPFKTLSSTKRTLNQASARVETYGYGEDENTLIVHPTMLDVAFQASFLARMSPGDDQLWSLHVPTFIKCIRVNPELCASIPSSPTSLSLSAVLHESDSLSMLSSVDVFTEDGQETMIQVEGLSMKPFSPATADDDRSMFSTTVYGSMSPDLAMDVGNGRPPSEGLAFSQCNVALACVAQQIVHRYPHAKILEIGAGEGHATRAVLESIGSKLSYTFTDSSTEVIEKAAESFKDFKEKVLLKTFDPLGKPSSQGLDEHAYDLVIASNILASNSVSHTELENIRRLLKPGGYLLASGLTGDAPTRTLGGGTVEGNDARKHGPVNTAQWHGALRKAGFSGIDSITPQTSGMASPFSAIVTQAVDKRINFLRKPLSTPSFVRLDELVIVGNQSLKAAQLTEEIYDHLIQFCGKITVLDGLPTDDDDISSMATFINLADIHEPIFRDISAEQFEGLKCLFELASNILWVTEGARADEPYHNASIGFGRSIAYEMPHLSLQFLDLNDTGSTASRVISEAVLRLVALREWEETEHNFKDKTLWSREPELYVEKERLMVPRLLQVDDQNDRINSLRRVVTKMVDPDNSSVLISKAVDGSFVLREEVLRQSGQNFVQIKHSVLSAINVAPEAFLFLGAGFSQVTDEVVITLSDANASMSTPLAHVPAQWHTGGLSTLISAVARQLLARRLISMVVAHSHLLVHGLDENESFVSILKQHAGLKDIDIKFSAANPAANSEWIQVTPWTSSHVTRQSIPATTTHFLDLSADDKNQDAAVIIREALPVICKHIGVSDLFRPESFVPAGSKDSILRALQDAVREAKTTASSEIPSASIRPTELIDATVLKSPLSVVDWTVDGEVPVQVQPIDATQLFSQHKTYVLVGLSGRLGQSISQWMSQNGAGCICLTSRTPKADPEWQAEMEKKGTTVKLIPMDVTNRADVERVFADLRANSPPIAGVASGAAVFHDATFSEMTHEILEKVMNPKVVGTKNLDEVLGDTKLDFFIVFSSLTSVVGNSGQSNYTAANAYMTGLVGQRRKRGLAATSLDIGSIVGIGYLERASDTAREQLIRNGFMAVSETDLHQLLAEAIRAGATNSSASPMVTTGCRNVQEGEEFPVPWIDDPRMQHKVILGEHSSKAEMAGKKSALPVRDQLAVSKSTADALEILKELSECFAAKLAMISRLADGQVGHDIPLVELGIDSLVAVEVRGWFLKELKTDIPVLKVLGGGTVATLCQQALEKLPESILPNVESGGPSKTGSSKPTAKPSVAKPRSPPSPSGSETGSPGRWSENNTTSPQSTLSSDQSPSSTPATVLSNVPSNVDLTTVAKSEMALIPSSDFVKTELVSFQQSRFWFLGLLIDDQATFNVTFYLRITGNLRTGDLERAVRLVTNRHESLRTCFVAHEQEADLAYQKVLPNSLVRLKRKNINRVEDVDIEYAAMKQVPFDLASGNLMRLVLLTLSASEHYLLFNYHHILMDGVSLQNFLADLEKAYQRQPLGPPPCQVPEFSRVQRAAFESGVFNEDIAYWKNEFPNGHPVLPLLPMSHITSRMALNSFNVHQVECRVDSELMAKVREAARVNGCTTFHFYLATFKAMLFRFTDAGDLTIGIADANRISPDVEGTIGLLLNLLTLRFQRNPSQTFAQSVGEARGKALEALKHSNVPFDILLKELNVPRSSAYSPFFQAFFDYRQGHQEKLSFGSTEFEFLQVHPGRTAYDMTLDVTDGADSARILFRTQASLYDKTAAQLLLNTFIHLLDTFATNTSLKLDDFALFSDKELKLALNVGHGPNFESSWPGGTIPHRIDQIAKENDDKVALKDGHGTILTYGAMINRTQAIAAALQQVGVGESSRVLVFEDATVDWPCSMLAIMRLGAVYVPLDLRNPLPRLADVAGSCKPVAILVDSTTLDHVAQVNVTFAEVVNVSEVGVNSIKVANVSRSDAVAALLYTSGSTGKPKGIVVTHSGLRNEIEGYTSQWVLKAERVLQQSAFTFNHSSDQIYTGLVNGGFVYIVPWDKRGDPIEVTKIIKEENITYTKATPAEYSLWLDYGSGNLKQASSWRFAFGGGESLTGTITRSLATLQLPNLRFFNSYGPTEISISSTKMEVAYRDSPPDGRIPCGFMLPNYAAYILDDQRKPVPVGMPGELYIGGAGVSLGYLDNEELTEQHFLPNPYAIPEYVAQGWTRMYRTGDIAHLQGDGAMVFHNRIAGDTQVKIRGLRIELGDIESNIIKAAEGALKEVAVTLRDGDPPILVAHVVFAPHHHIVDTEAFLVQLLKNLDVPQYMVPVMAIPLERMPLSNHSKTDRKALKELPLPQRSNHDTGDNTESLTETMLELRRLWVDVLNTGELGLDIGPSTSFFTVGGNSLLIVRLQSRIRQTFNVTVRLFDLIDANTLSDMTQKIEESLNVDLIDWDKETALLSDFTMPEATKHQPLKTTDKVILVTGSGGFLGKHILTELIARPDVSKIHCIGLRDKPGNTPRRLALNSTKIITHSGDLTEPWLGLGEEKFASLTLEVDVILHMAATRSFWDNYSLLRPINVTPTKLLVQMATGRKIPIHYVSSAGVVSAEGVEILAGSAAKYQPRVDGSNGYVASRWASEQILEHAVSALDVPVSIHRFVPAKEPANQTVVVDALQHFVSFVDELSIMPDFSGTTGHFEMTPIHSAASQLAENLVKTPTQQSSLLEFVHHDCPIRIDIAEMVAFLEEQRGGKGLEKVPGLKFVGDMKRAGLAYFVTSQTLLMGGTNGTSVVLESRR.

The region spanning 6 to 438 is the Ketosynthase family 3 (KS3) domain; sequence PEPIAIVGSG…GTNGHAILEE (433 aa). Catalysis depends on for beta-ketoacyl synthase activity residues C179, H318, and H358. Residues 554-885 form a malonyl-CoA:ACP transacylase (MAT) domain region; that stretch reads IFTGQGAQWA…FSDALGFVWT (332 aa). Residues 943–1081 form an N-terminal hotdog fold region; it reads HELLGVPSPN…GKVTVIYGTP (139 aa). A dehydratase (DH) domain region spans residues 943–1247; sequence HELLGVPSPN…LSMKPFSPAT (305 aa). The 307-residue stretch at 943-1249 folds into the PKS/mFAS DH domain; it reads HELLGVPSPN…MKPFSPATAD (307 aa). Residue H975 is the Proton acceptor; for dehydratase activity of the active site. Residues 1096–1249 are C-terminal hotdog fold; the sequence is MVDIQAEQFY…MKPFSPATAD (154 aa). The Proton donor; for dehydratase activity role is filled by D1156. Residues 1290–1456 form a methyltransferase (MT) domain region; the sequence is LACVAQQIVH…RKAGFSGIDS (167 aa). A ketoreductase (KR) domain region spans residues 1984 to 2158; sequence TYVLVGLSGR…ATSLDIGSIV (175 aa). In terms of domain architecture, Carrier 1 spans 2266–2347; that stretch reads ADALEILKEL…TLCQQALEKL (82 aa). O-(pantetheine 4'-phosphoryl)serine is present on S2307. Residues 2351–2422 are disordered; sequence ILPNVESGGP…SSTPATVLSN (72 aa). 2 stretches are compositionally biased toward low complexity: residues 2357 to 2369 and 2399 to 2418; these read SGGP…SKPT and TTSP…TPAT. The interval 2446 to 2884 is condensation (C) domain; that stretch reads VKTELVSFQQ…FALFSDKELK (439 aa). The segment at 2910 to 3310 is adenylation (A) domain; that stretch reads QIAKENDDKV…GAMVFHNRIA (401 aa). The disordered stretch occupies residues 3403 to 3429; sequence SKTDRKALKELPLPQRSNHDTGDNTES. The Carrier 2 domain occupies 3428–3507; it reads ESLTETMLEL…DMTQKIEESL (80 aa). At S3467 the chain carries O-(pantetheine 4'-phosphoryl)serine. Residues 3544–3768 form a reductase (R) domain region; it reads VTGSGGFLGK…EMTPIHSAAS (225 aa).

It in the C-terminal section; belongs to the NRP synthetase family.

Its pathway is secondary metabolite biosynthesis. Its function is as follows. Hybrid PKS-NRPS synthetase; part of the tra gene cluster that produces terrestric acid. The clavatol biosynthesis cluster cla and the terrestric acid cluster tra are both involved in the production of peniphenones and penilactones. The non-reducing PKS claF is responsible for the formation of clavatol from successive condensations of 3 malonyl-CoA units, presumably with a simple acetyl-CoA starter unit, and 2 methylation steps. The esterase claE probably collaborates with claF by catalyzing the hydrolysis of ACP-bound acyl intermediates to free the ACP from stalled intermediates. The clavatol oxidase claD then converts clavatol to hydroxyclavatol. Spontaneous dehydration of hydroxyclavatol leads to the accumulation of the highly active ortho-quinone methide. On the other hand, the PKS-NRPS hybrid traA is involved in the formation of crustosic acid, with the help of traB and traD. The polyketide synthase module (PKS) of traA is responsible for the synthesis of the polyketide backbone via the condensation of an acetyl-CoA starter unit with 3 malonyl-CoA units. The downstream nonribosomal peptide synthetase (NRPS) module then amidates the carboxyl end of the polyketide with L-malic acid. Because traA lacks a designated enoylreductase (ER) domain, the required activity is provided the enoyl reductase traG. Crustosic acid undergoes decarboxylation and isomerization to the terrestric acid, catalyzed by the 2-oxoglutarate-dependent dioxygenase traH. Both acids are further converted to the 2 gamma-butyrolactones (R)-5-methyltetronic acid and (S)-5-carboxylmethyltetronic acid, with involvement of the cytochrome P450 monooxygenase claJ. Spontaneous addition of the methide to these gamma-butyrolactones leads to peniphenone D and penilactone D, which undergo again stereospecific attacking by methide to give penilactones A and B. This Penicillium crustosum (Blue mold fungus) protein is Hybrid PKS-NRPS synthetase traA.